The following is a 303-amino-acid chain: N-acetyl-D-glucosamine kinase (303 aa).

Residues 4–11 (GFDIGGTK) and 133–140 (GVGGGLVL) each bind ATP. Zn(2+) contacts are provided by H157, C177, C179, and C184.

The protein belongs to the ROK (NagC/XylR) family. NagK subfamily.

It catalyses the reaction N-acetyl-D-glucosamine + ATP = N-acetyl-D-glucosamine 6-phosphate + ADP + H(+). Its pathway is cell wall biogenesis; peptidoglycan recycling. Its function is as follows. Catalyzes the phosphorylation of N-acetyl-D-glucosamine (GlcNAc) derived from cell-wall degradation, yielding GlcNAc-6-P. The polypeptide is N-acetyl-D-glucosamine kinase (Salmonella newport (strain SL254)).